The chain runs to 245 residues: Zinc finger protein AZF1 (245 aa).

Over residues Met-1–Ala-15 the composition is skewed to polar residues. Disordered stretches follow at residues Met-1–Leu-57 and Leu-112–Asn-141. A C2H2-type 1 zinc finger spans residues Tyr-97–His-119. Positions Thr-123–Leu-134 are enriched in polar residues. The segment at His-164 to His-186 adopts a C2H2-type 2 zinc-finger fold. A disordered region spans residues Gly-193–Phe-231.

Highly expressed in roots and at lower levels in leaves and stems.

It localises to the nucleus. In terms of biological role, transcriptional repressor involved in the inhibition of plant growth under abiotic stress conditions. Can repress the expression of various genes, including osmotic stress and abscisic acid-repressive genes and auxin-inducible genes, by binding to their promoter regions in a DNA sequence-specific manner. The sequence is that of Zinc finger protein AZF1 (AZF1) from Arabidopsis thaliana (Mouse-ear cress).